Here is a 155-residue protein sequence, read N- to C-terminus: 3-hydroxyacyl-[acyl-carrier-protein] dehydratase FabZ (155 aa).

His54 is an active-site residue.

The protein belongs to the thioester dehydratase family. FabZ subfamily.

It localises to the cytoplasm. It carries out the reaction a (3R)-hydroxyacyl-[ACP] = a (2E)-enoyl-[ACP] + H2O. Involved in unsaturated fatty acids biosynthesis. Catalyzes the dehydration of short chain beta-hydroxyacyl-ACPs and long chain saturated and unsaturated beta-hydroxyacyl-ACPs. In Burkholderia mallei (strain NCTC 10247), this protein is 3-hydroxyacyl-[acyl-carrier-protein] dehydratase FabZ.